The sequence spans 473 residues: H(+)/Cl(-) exchange transporter ClcA (473 aa).

Over 1–32 the chain is Cytoplasmic; that stretch reads MKTDTPSLETPQAARLRRRQLIRQLLERDKTP. Residues 33–69 form a helical membrane-spanning segment; it reads LAILFMAAVVGTLVGLAAVAFDKGVAWLQNQRMGALV. Residues 70–76 are Periplasmic-facing; sequence HTADNYP. Residues 77–100 traverse the membrane as a helical segment; the sequence is LLLTVAFLCSAVLAMFGYFLVRKY. Residues 106–110 carry the Selectivity filter part_1 motif; it reads GSGIP. Position 107 (serine 107) interacts with chloride. The segment at residues 109–116 is an intramembrane region (helical); that stretch reads IPEIEGAL. At 117 to 123 the chain is on the cytoplasmic side; the sequence is EDQRPVR. 2 helical membrane-spanning segments follow: residues 124–141 and 148–166; these read WWRV…TLGG and EGPT…LDIF. The short motif at 146–150 is the Selectivity filter part_2 element; sequence GREGP. The Cytoplasmic portion of the chain corresponds to 167–176; the sequence is RLKGDEARHT. 2 consecutive intramembrane regions (helical) follow at residues 177–189 and 193–201; these read LLAT…LAAA and PLAGILFII. Topologically, residues 202 to 214 are cytoplasmic; that stretch reads EEMRPQFRYTLIS. A helical transmembrane segment spans residues 215 to 232; that stretch reads IKAVFIGVIMSTIMYRIF. Topologically, residues 233-252 are periplasmic; it reads NHEVALIDVGKLSDAPLNTL. Residues 253-281 form a helical membrane-spanning segment; that stretch reads WLYLILGIIFGIFGPIFNKWVLGMQDLLH. Topologically, residues 282-287 are cytoplasmic; sequence RVHGGN. A helical transmembrane segment spans residues 288–309; sequence ITKWILMGGAIGGLCGLLGFVA. Residues 310–329 are Periplasmic-facing; that stretch reads PATSGGGFNLIPIATAGNFS. Transmembrane regions (helical) follow at residues 330–349 and 355–376; these read MGML…LCFS and GIFA…MVAV. Residues 355–359 carry the Selectivity filter part_3 motif; that stretch reads GIFAP. Chloride contacts are provided by isoleucine 356 and phenylalanine 357. Topologically, residues 377-386 are periplasmic; that stretch reads ELFPQYHLEA. The segment at residues 387 to 401 is an intramembrane region (helical); sequence GTFAIAGMGALLAAS. The note=Loop between two helices intramembrane region spans 402-404; that stretch reads IRA. An intramembrane region (helical) is located at residues 405-416; sequence PLTGIILVLEMT. An intramembrane region (note=Loop between two helices) is located at residues 417 to 421; it reads DNYQL. Residues 422-438 form a helical membrane-spanning segment; sequence ILPMIITGLGATLLAQF. Residues 439–473 lie on the Cytoplasmic side of the membrane; the sequence is TGGKPLYSAILARTLAKQEAEQLARSKAASASENT. Tyrosine 445 lines the chloride pocket.

Belongs to the chloride channel (TC 2.A.49) family. ClcA subfamily. In terms of assembly, homodimer.

It is found in the cell inner membrane. It carries out the reaction 2 chloride(in) + H(+)(out) = 2 chloride(out) + H(+)(in). Its function is as follows. Proton-coupled chloride transporter. Functions as antiport system and exchanges two chloride ions for 1 proton. Probably acts as an electrical shunt for an outwardly-directed proton pump that is linked to amino acid decarboxylation, as part of the extreme acid resistance (XAR) response. This Escherichia coli O9:H4 (strain HS) protein is H(+)/Cl(-) exchange transporter ClcA.